We begin with the raw amino-acid sequence, 1276 residues long: Probable histone acetyltransferase HAC-like 3 (1276 aa).

The tract at residues 391-421 (VDRAEQTSNSTVSKPTSPASDGSSGKHYPAK) is disordered. The span at 396–413 (QTSNSTVSKPTSPASDGS) shows a compositional bias: polar residues. The segment at 621–689 (SSICGRCHHL…EYTCAKCFLK (69 aa)) adopts a PHD-type zinc-finger fold. Residues 704–1130 (ILGARELPRT…ILYHLHDSTC (427 aa)) form the CBP/p300-type HAT domain. Acetyl-CoA is bound by residues 827 to 829 (IDS), 846 to 847 (RT), and Trp902. Residues 953–973 (EAERLLEKKDDDTSQKKETQL) adopt a coiled-coil conformation. 2 consecutive ZZ-type zinc fingers follow at residues 1013-1076 (CLQQ…EEPL) and 1125-1187 (LHDS…LQDY). The Zn(2+) site is built by Cys1018, Cys1021, Cys1033, Cys1036, Cys1042, Cys1045, His1058, His1066, Cys1130, Cys1133, Cys1145, Cys1148, Cys1154, Cys1157, His1168, and His1177. A TAZ-type zinc finger spans residues 1177 to 1260 (HVLQKYTLQD…DCSAPRCRDI (84 aa)).

Its subcellular location is the nucleus. It carries out the reaction L-lysyl-[protein] + acetyl-CoA = N(6)-acetyl-L-lysyl-[protein] + CoA + H(+). Functionally, acetyltransferase enzyme. Acetylates histones, giving a specific tag for transcriptional activation. The polypeptide is Probable histone acetyltransferase HAC-like 3 (Oryza sativa subsp. japonica (Rice)).